The chain runs to 602 residues: MKNLSFLINRRKENTSDSNVYPGKAKSHEPSWIEMDDQTKKDGLDIVHVEFSPDTRAPSDSNKVITEIFDATEDAKEADESERGMPLATALNTYPKAAAWSLLVSTTLIMEGYDTAILGAFYALPIFQRKFGSQNDKTGEWEISASWQIGLTLCYMAGEIVGLQLTGPSVDLVGNRYTLIIALFFLAAFTFILYFCNSLGMIAVGQALCGMPWGCFQCLTVSYASEICPLALRYYLTTYSNLCWLFGQLFAAGIMKNSQKKYADSELGYKLPFALQWILPVPLALGIFFAPESPWWLVKKGRFDEARRSLRRTLSGKGPEKEILVTLEVDKIKVTIDKEKRLTSKEGSYSDCFEDKINRRRTRITCLCWAGQATCGSILIGYSTYFYEKAGVSTEMSFTFSIIQYCLGICATFLSWWASKYFGRYDLYAFGLAFQTIVFFIIGGLGCSSTHGSKMGSGSLLMAVAFFYNLGIAPVVFCLVSEMPSSRLRTKTIILARNTYNVVSIICSVLILYQLNSKKWNWGAKSGFFWGVLCFCTLIWAVVDLPETAGKTFVEINELFKLGVSARKFKSTKVDPFVVKTPPKDVSHNDPKGDIEASIAEE.

Topologically, residues 1–106 are cytoplasmic; the sequence is MKNLSFLINR…AAAWSLLVST (106 aa). A helical membrane pass occupies residues 107 to 127; sequence TLIMEGYDTAILGAFYALPIF. The Extracellular portion of the chain corresponds to 128-142; the sequence is QRKFGSQNDKTGEWE. Residues 143–163 traverse the membrane as a helical segment; the sequence is ISASWQIGLTLCYMAGEIVGL. Topologically, residues 164 to 178 are cytoplasmic; sequence QLTGPSVDLVGNRYT. A helical transmembrane segment spans residues 179-199; it reads LIIALFFLAAFTFILYFCNSL. Residue Gly200 is a topological domain, extracellular. A helical transmembrane segment spans residues 201–221; sequence MIAVGQALCGMPWGCFQCLTV. At 222–234 the chain is on the cytoplasmic side; it reads SYASEICPLALRY. Residues 235–255 traverse the membrane as a helical segment; sequence YLTTYSNLCWLFGQLFAAGIM. At 256–270 the chain is on the extracellular side; the sequence is KNSQKKYADSELGYK. A helical transmembrane segment spans residues 271-291; it reads LPFALQWILPVPLALGIFFAP. Residues 292–363 lie on the Cytoplasmic side of the membrane; it reads ESPWWLVKKG…EDKINRRRTR (72 aa). The helical transmembrane segment at 364 to 384 threads the bilayer; the sequence is ITCLCWAGQATCGSILIGYST. The Extracellular portion of the chain corresponds to 385–397; that stretch reads YFYEKAGVSTEMS. Residues 398 to 418 traverse the membrane as a helical segment; it reads FTFSIIQYCLGICATFLSWWA. Residues 419-426 are Cytoplasmic-facing; that stretch reads SKYFGRYD. A helical transmembrane segment spans residues 427–447; the sequence is LYAFGLAFQTIVFFIIGGLGC. Topologically, residues 448–459 are extracellular; sequence SSTHGSKMGSGS. A helical membrane pass occupies residues 460-480; the sequence is LLMAVAFFYNLGIAPVVFCLV. Residues 481–492 are Cytoplasmic-facing; the sequence is SEMPSSRLRTKT. Residues 493–513 form a helical membrane-spanning segment; sequence IILARNTYNVVSIICSVLILY. Over 514–525 the chain is Extracellular; sequence QLNSKKWNWGAK. The chain crosses the membrane as a helical span at residues 526–546; the sequence is SGFFWGVLCFCTLIWAVVDLP. Residues 547–602 lie on the Cytoplasmic side of the membrane; sequence ETAGKTFVEINELFKLGVSARKFKSTKVDPFVVKTPPKDVSHNDPKGDIEASIAEE. Residues 582 to 595 are compositionally biased toward basic and acidic residues; the sequence is PPKDVSHNDPKGDI. The disordered stretch occupies residues 582-602; the sequence is PPKDVSHNDPKGDIEASIAEE.

This sequence belongs to the major facilitator superfamily. Sugar transporter (TC 2.A.1.1) family.

It is found in the cell membrane. In terms of biological role, high-affinity uptake of maltose and maltotriose. Also transports alpha-methylglucoside, glucose and turanose but not melezitose or trehalose. The sequence is that of Alpha-glucosides permease MPH3 (MPH3) from Saccharomyces cerevisiae (strain ATCC 204508 / S288c) (Baker's yeast).